We begin with the raw amino-acid sequence, 427 residues long: MRKEKSLGLAAEMRKLAEASREAARALSHADPRRKDAALRAAAEAIGRREKRILSENARDVAAARAAGQNAAYLDRLRLDPKRLAGIGAALHEIAGLRDPVGEVTASWRRPNGLEIRKVRIPLGVVLMVYEARPNVTVDAAALCLKSGNAAILRPGSDALRSSLALAAAFAEGLEKAGLPAASAQVVPTPDREATYELLALDDLIDLAIPRGGPSLIRAVAARSRVPVLKHYQGVCHLYLDASAPPQQAVDLALNGKVQRPGVCNATECLLVHRGAAGKLLPPVGRALADAGVELRCDPTALTILKRAGVAAVPARPDDFGKEFLDKILAVRVVADLDGALDHIARYGSLHTEAIVTRDLASARRFQREVDASAVMVNASTRFNDGGELGLGAEIGISTTKLHAFGPMGLAELTTQKFLVEGEGHVR.

Belongs to the gamma-glutamyl phosphate reductase family.

The protein localises to the cytoplasm. It carries out the reaction L-glutamate 5-semialdehyde + phosphate + NADP(+) = L-glutamyl 5-phosphate + NADPH + H(+). It participates in amino-acid biosynthesis; L-proline biosynthesis; L-glutamate 5-semialdehyde from L-glutamate: step 2/2. In terms of biological role, catalyzes the NADPH-dependent reduction of L-glutamate 5-phosphate into L-glutamate 5-semialdehyde and phosphate. The product spontaneously undergoes cyclization to form 1-pyrroline-5-carboxylate. This Anaeromyxobacter dehalogenans (strain 2CP-1 / ATCC BAA-258) protein is Gamma-glutamyl phosphate reductase.